The following is a 553-amino-acid chain: Neutral amino acid transporter B(0) (553 aa).

Position 1 is an N-acetylmethionine (M1). The Cytoplasmic portion of the chain corresponds to M1–A50. A helical transmembrane segment spans residues N51–L80. Over G81–E93 the chain is Extracellular. A helical membrane pass occupies residues L94 to A115. The Cytoplasmic portion of the chain corresponds to A116 to W129. A helical membrane pass occupies residues A130–L152. At K153–C236 the chain is on the extracellular side. Residues N165 and N228 are each glycosylated (N-linked (GlcNAc...) asparagine). Residues E237–L260 traverse the membrane as a helical segment. The Cytoplasmic segment spans residues G261 to R269. A helical membrane pass occupies residues F270–V297. Topologically, residues A298–I318 are extracellular. Residues L319–F340 form a helical membrane-spanning segment. Residues T341–P345 are Cytoplasmic-facing. The segment at residues Y346 to V376 is an intramembrane region (discontinuously helical). The Cytoplasmic portion of the chain corresponds to E377–H385. Residues I386–F412 form a helical membrane-spanning segment. G394, T396, and N398 together coordinate Na(+). Over I413–K425 the chain is Extracellular. The segment at residues I426–S459 is an intramembrane region (discontinuously helical). Over L460–D472 the chain is Extracellular. A helical transmembrane segment spans residues W473 to L494. Residues N483 and D487 each coordinate Na(+). Over Q495–M553 the chain is Cytoplasmic. Phosphoserine occurs at positions 505, 506, 518, 543, and 551. The segment at P531–M553 is disordered. Residues Q537–T546 show a composition bias toward polar residues.

Belongs to the dicarboxylate/amino acid:cation symporter (DAACS) (TC 2.A.23) family. SLC1A5 subfamily. As to quaternary structure, homotrimer. In terms of tissue distribution, highly expressed in adipose tissue. Detected in lung, skeletal muscle, large intestine, kidney and testis. Expressed in lung, brain, kidney and neural retina (at protein level). Expressed in Mueller cells (at protein level).

It localises to the cell membrane. The protein resides in the melanosome. It carries out the reaction L-glutamine(out) + L-serine(in) + Na(+)(out) = L-glutamine(in) + L-serine(out) + Na(+)(in). The enzyme catalyses L-glutamine(in) + L-serine(out) + Na(+)(out) = L-glutamine(out) + L-serine(in) + Na(+)(in). The catalysed reaction is L-threonine(in) + L-glutamine(out) + Na(+)(out) = L-threonine(out) + L-glutamine(in) + Na(+)(in). It catalyses the reaction L-threonine(out) + L-glutamine(in) + Na(+)(out) = L-threonine(in) + L-glutamine(out) + Na(+)(in). It carries out the reaction L-asparagine(in) + L-glutamine(out) + Na(+)(out) = L-asparagine(out) + L-glutamine(in) + Na(+)(in). The enzyme catalyses L-asparagine(out) + L-glutamine(in) + Na(+)(out) = L-asparagine(in) + L-glutamine(out) + Na(+)(in). The catalysed reaction is L-glutamine(in) + L-alanine(out) + Na(+)(out) = L-glutamine(out) + L-alanine(in) + Na(+)(in). It catalyses the reaction L-valine(out) + L-glutamine(in) + Na(+)(out) = L-valine(in) + L-glutamine(out) + Na(+)(in). It carries out the reaction L-glutamine(in) + L-methionine(out) + Na(+)(out) = L-glutamine(out) + L-methionine(in) + Na(+)(in). The enzyme catalyses L-glutamine(in) + L-glutamate(out) + Na(+)(out) + H(+)(out) = L-glutamine(out) + L-glutamate(in) + Na(+)(in) + H(+)(in). The catalysed reaction is D-serine(in) + L-glutamine(out) + Na(+)(out) = D-serine(out) + L-glutamine(in) + Na(+)(in). It catalyses the reaction D-serine(in) + L-alanine(out) + Na(+)(out) = D-serine(out) + L-alanine(in) + Na(+)(in). It carries out the reaction nitrate(in) = nitrate(out). The enzyme catalyses iodide(out) = iodide(in). The catalysed reaction is thiocyanate(in) = thiocyanate(out). Down-regulated at acidic pH, with the exception of L-glutamate transport which is up-regulated instead. Functionally, sodium-coupled antiporter of neutral amino acids. In a tri-substrate transport cycle, exchanges neutral amino acids between the extracellular and intracellular compartments, coupled to the inward cotransport of at least one sodium ion. The preferred substrate is the essential amino acid L-glutamine, a precursor for biosynthesis of proteins, nucleotides and amine sugars as well as an alternative fuel for mitochondrial oxidative phosphorylation. Exchanges L-glutamine with other neutral amino acids such as L-serine, L-threonine and L-asparagine in a bidirectional way. Provides L-glutamine to proliferating stem and activated cells driving the metabolic switch toward cell differentiation. The transport cycle is usually pH-independent, with the exception of L-glutamate. Transports extracellular L-glutamate coupled to the cotransport of one proton and one sodium ion in exchange for intracellular L-glutamine counter-ion. May provide for L-glutamate uptake in glial cells regulating glutamine/glutamate cycle in the nervous system. Can transport D-amino acids. Mediates D-serine release from the retinal glia potentially affecting NMDA receptor function in retinal neurons. Displays sodium- and amino acid-dependent but uncoupled channel-like anion conductance with a preference SCN(-) &gt;&gt; NO3(-) &gt; I(-) &gt; Cl(-). Through binding of the fusogenic protein syncytin-1/ERVW-1 may mediate trophoblasts syncytialization, the spontaneous fusion of their plasma membranes, an essential process in placental development. This chain is Neutral amino acid transporter B(0) (Slc1a5), found in Mus musculus (Mouse).